A 359-amino-acid polypeptide reads, in one-letter code: Serine/threonine-protein kinase mos (359 aa).

The region spanning 63 to 336 is the Protein kinase domain; sequence VLLLEPLGSG…LLERLEQECA (274 aa). Residues 69–77 and lysine 90 contribute to the ATP site; that span reads LGSGGFGSV. Residue aspartate 189 is the Proton acceptor of the active site.

It belongs to the protein kinase superfamily. Ser/Thr protein kinase family.

It is found in the cytoplasm. It catalyses the reaction L-seryl-[protein] + ATP = O-phospho-L-seryl-[protein] + ADP + H(+). The catalysed reaction is L-threonyl-[protein] + ATP = O-phospho-L-threonyl-[protein] + ADP + H(+). Serine/threonine kinase involved in the regulation of MAPK signaling. In Xenopus laevis (African clawed frog), this protein is Serine/threonine-protein kinase mos (mos).